We begin with the raw amino-acid sequence, 69 residues long: Large ribosomal subunit protein uL29 (69 aa).

The protein belongs to the universal ribosomal protein uL29 family.

This chain is Large ribosomal subunit protein uL29, found in Synechococcus sp. (strain CC9902).